The following is a 423-amino-acid chain: Adenylosuccinate synthetase (423 aa).

GTP is bound by residues 12 to 18 (GDEGKGK) and 40 to 42 (GHT). The active-site Proton acceptor is the D13. Positions 13 and 40 each coordinate Mg(2+). Residues 13–16 (DEGK), 38–41 (NAGH), T129, R143, Q224, T239, and R303 contribute to the IMP site. The active-site Proton donor is the H41. 299 to 305 (SVTGRQR) is a binding site for substrate. GTP-binding positions include R305, 331-333 (KGD), and 412-414 (SVG).

The protein belongs to the adenylosuccinate synthetase family. As to quaternary structure, homodimer. The cofactor is Mg(2+).

Its subcellular location is the cytoplasm. It carries out the reaction IMP + L-aspartate + GTP = N(6)-(1,2-dicarboxyethyl)-AMP + GDP + phosphate + 2 H(+). The protein operates within purine metabolism; AMP biosynthesis via de novo pathway; AMP from IMP: step 1/2. Its function is as follows. Plays an important role in the de novo pathway of purine nucleotide biosynthesis. Catalyzes the first committed step in the biosynthesis of AMP from IMP. This Flavobacterium johnsoniae (strain ATCC 17061 / DSM 2064 / JCM 8514 / BCRC 14874 / CCUG 350202 / NBRC 14942 / NCIMB 11054 / UW101) (Cytophaga johnsonae) protein is Adenylosuccinate synthetase.